The chain runs to 71 residues: Large ribosomal subunit protein uL29 (71 aa).

Belongs to the universal ribosomal protein uL29 family.

This is Large ribosomal subunit protein uL29 from Methanocella arvoryzae (strain DSM 22066 / NBRC 105507 / MRE50).